A 476-amino-acid polypeptide reads, in one-letter code: Exodeoxyribonuclease 7 large subunit (476 aa).

Belongs to the XseA family. As to quaternary structure, heterooligomer composed of large and small subunits.

Its subcellular location is the cytoplasm. The enzyme catalyses Exonucleolytic cleavage in either 5'- to 3'- or 3'- to 5'-direction to yield nucleoside 5'-phosphates.. Its function is as follows. Bidirectionally degrades single-stranded DNA into large acid-insoluble oligonucleotides, which are then degraded further into small acid-soluble oligonucleotides. This is Exodeoxyribonuclease 7 large subunit from Bartonella tribocorum (strain CIP 105476 / IBS 506).